The sequence spans 496 residues: MDDKQHTSSSDDERAEIATSNQDQETNSSKRVHLKRWQFISILIGTTLITAVITVVAYIFINQKISGLNKTDQANLNKIENVYKILNSDYYKKQDSDKLSKAAIDGMVKELKDPYSEYLTKEQTKSFNEGVSGDFVGIGAEMQKKNDQIMVTSPMKGSPAERAGIRPKDVITKVNGKSIKGKALDEVVKDVRGKENTEVTLTVQRGSEEKDVKIKREKIHVKSVDYKKKGKVGVITINKFQNDTSGELKDAVLKAHKDGLKKIVLDLRNNPGGLLDEAVKMANIFIDKGKTVVKLEKGKDTEAIQTSNDSLKEAKDMDISILVNEGSASASEVFTGALKDYNKAKVYGSKTFGKGVVQTTREFKDGSLLKYTEMKWLTPDGHYIHGKGIKPDVTIDTPKYQSLNVIPNTKTFKVGDDDKNIKTIKIGLSALGYKVDNESTQFDQALENQVKAFQQANKLEVTGEFNKETNNKFTELLVEKANKHDDVLDKLINILK.

Positions 1–16 (MDDKQHTSSSDDERAE) are enriched in basic and acidic residues. A disordered region spans residues 1–27 (MDDKQHTSSSDDERAEIATSNQDQETN). The segment covering 18–27 (ATSNQDQETN) has biased composition (polar residues). A helical membrane pass occupies residues 39-59 (FISILIGTTLITAVITVVAYI). In terms of domain architecture, PDZ spans 124–206 (TKSFNEGVSG…TEVTLTVQRG (83 aa)). Active-site charge relay system residues include S329, D340, and K354.

This sequence belongs to the peptidase S41A family.

It localises to the cell membrane. This chain is Probable CtpA-like serine protease, found in Staphylococcus aureus (strain Mu50 / ATCC 700699).